Consider the following 420-residue polypeptide: Glucose-1-phosphate adenylyltransferase (420 aa).

Residues Tyr-107, Gly-173, Glu-188 to Lys-189, and Ser-206 each bind alpha-D-glucose 1-phosphate.

It belongs to the bacterial/plant glucose-1-phosphate adenylyltransferase family. As to quaternary structure, homotetramer.

The catalysed reaction is alpha-D-glucose 1-phosphate + ATP + H(+) = ADP-alpha-D-glucose + diphosphate. It functions in the pathway glycan biosynthesis; glycogen biosynthesis. Its function is as follows. Involved in the biosynthesis of ADP-glucose, a building block required for the elongation reactions to produce glycogen. Catalyzes the reaction between ATP and alpha-D-glucose 1-phosphate (G1P) to produce pyrophosphate and ADP-Glc. This chain is Glucose-1-phosphate adenylyltransferase, found in Shewanella baltica (strain OS155 / ATCC BAA-1091).